Reading from the N-terminus, the 91-residue chain is Parbolysin P6 (91 aa).

Intrachain disulfides connect C16-C37, C22-C33, and C47-C60.

Belongs to the worm cytolysin family. Localized within the skin and proboscis and are most readily isolated from body mucus secretions.

It is found in the secreted. Cytolysin that shows hemolytic activity (on bovine erythrocytes, HC(50)=5.75 mg/ml). This hemolytic activity is completely inhibited by small unilamelar vesicles composed of PC/PG, PC/PI and PC/PS in 1:1 molar ratios (with at least 100 mg/ml concentration). This chain is Parbolysin P6, found in Parborlasia corrugatus (Antarctic nemertean worm).